A 119-amino-acid chain; its full sequence is Beta-2-microglobulin (119 aa).

A signal peptide spans 1–20 (MVCSVVVALLALLSLSGLEA). The Ig-like C1-type domain maps to 25 to 114 (PKIQVYSRHP…VTFSTPKTVK (90 aa)). C45 and C100 are oxidised to a cystine.

Belongs to the beta-2-microglobulin family. Heterodimer of an alpha chain and a beta chain. Beta-2-microglobulin is the beta-chain of major histocompatibility complex class I molecules.

It localises to the secreted. Functionally, component of the class I major histocompatibility complex (MHC). Involved in the presentation of peptide antigens to the immune system. This Cebuella pygmaea (Pygmy marmoset) protein is Beta-2-microglobulin (B2M).